Here is a 78-residue protein sequence, read N- to C-terminus: Large ribosomal subunit protein bL28 (78 aa).

Residues 1 to 21 form a disordered region; that stretch reads MSRVCQVTGKRPVSGNNRSHA.

The protein belongs to the bacterial ribosomal protein bL28 family.

This Serratia proteamaculans (strain 568) protein is Large ribosomal subunit protein bL28.